Reading from the N-terminus, the 222-residue chain is Glutathione S-transferase A4 (222 aa).

N-acetylmethionine is present on M1. In terms of domain architecture, GST N-terminal spans 3 to 83; it reads TKPKLHYPNG…YIADKHHLFG (81 aa). Residues Y9, 54-55, and 67-68 contribute to the glutathione site; these read QV and QT. Residues 85–208 enclose the GST C-terminal domain; the sequence is DLKERTLIDM…EPGSKKKPPP (124 aa).

This sequence belongs to the GST superfamily. Alpha family. In terms of assembly, homodimer.

Its subcellular location is the cytoplasm. The enzyme catalyses RX + glutathione = an S-substituted glutathione + a halide anion + H(+). Functionally, conjugation of reduced glutathione to a wide number of exogenous and endogenous hydrophobic electrophiles. In Bos taurus (Bovine), this protein is Glutathione S-transferase A4 (GSTA4).